We begin with the raw amino-acid sequence, 818 residues long: BDNF/NT-3 growth factors receptor (818 aa).

An N-terminal signal peptide occupies residues 1 to 31 (MVSWRRRPGPGLARLWGLCCLVLGCWRGALG). Cystine bridges form between C32–C38 and C36–C45. Residues 32–426 (CPASCRCSSW…DVSNKENEDS (395 aa)) are Extracellular-facing. N66 carries an N-linked (GlcNAc...) asparagine glycan. The stretch at 71 to 92 (YIANQRKLESINDNEVGFYVGL) is one LRR 1 repeat. N94 carries N-linked (GlcNAc...) asparagine glycosylation. One copy of the LRR 2 repeat lies at 95–116 (LTVVDSGLRFVSRQAFVKNINL). Residue N120 is glycosylated (N-linked (GlcNAc...) asparagine). 2 disulfide bridges follow: C151-C175 and C153-C193. Residues 196–281 (PSANLSNYNI…GEVQTSAELT (86 aa)) form the Ig-like C2-type 1 domain. N199, N204, N226, N253, N287, N324, and N337 each carry an N-linked (GlcNAc...) asparagine glycan. A disulfide bridge connects residues C217 and C265. Residues 295 to 364 (TPDHHWCIPF…NGAYTLLAKN (70 aa)) enclose the Ig-like C2-type 2 domain. The cysteines at positions 301 and 344 are disulfide-linked. A provides specificity for BDNF as ligand versus NTF3 and NTF4 region spans residues 384 to 394 (GSGPIVDPDVY). Residues 400–418 (PNDLGDTTNNSNQITSPDV) are compositionally biased toward polar residues. The tract at residues 400–420 (PNDLGDTTNNSNQITSPDVSN) is disordered. An N-linked (GlcNAc...) asparagine glycan is attached at N408. The helical transmembrane segment at 427–450 (ITVYVVVGIAALVCTGLVIMLIIL) threads the bilayer. The Cytoplasmic portion of the chain corresponds to 451–818 (KFGRHSKFGM…ASPVYLDILG (368 aa)). The tract at residues 469–494 (NDDDSASPLHHISNGSNTPSSSEGGP) is disordered. Residues 481 to 491 (SNGSNTPSSSE) show a composition bias toward polar residues. Y512 is modified (phosphotyrosine; by autocatalysis). Residues 534–803 (IVLKRELGEG…LNIKEIHSLL (270 aa)) enclose the Protein kinase domain. ATP is bound by residues 540 to 548 (LGEGAFGKV) and K568. The active-site Proton acceptor is the D672. 4 positions are modified to phosphotyrosine; by autocatalysis: Y698, Y702, Y703, and Y813.

The protein belongs to the protein kinase superfamily. Tyr protein kinase family. Insulin receptor subfamily. In terms of assembly, exists in a dynamic equilibrium between monomeric (low affinity) and dimeric (high affinity) structures. Interacts (phosphorylated upon activation by BDNF) with SHC1; mediates SHC1 phosphorylation and activation. Interacts (phosphorylated upon activation by BDNF) with PLCG1 and/or PLCG2; mediates PLCG1 phosphorylation and activation. Interacts with SH2B1 and SH2B2. Interacts with NGFR; may regulate the ligand specificity of the receptor. Interacts with SORCS2; this interaction is important for normal targeting to post-synaptic densities in response to high-frequency stimulation. Interacts (phosphorylated upon ligand-binding) with SH2D1A; regulates NTRK2. Interacts with SQSTM1 and KIDINS220. Interacts (phosphorylated upon ligand-binding) with FRS2; activates the MAPK signaling pathway. Interacts with APPL1. Interacts with MAPK8IP3/JIP3 and KLC1; interaction with KLC1 is mediated by MAPK8IP3/JIP3. In terms of processing, ligand-mediated auto-phosphorylation. In terms of tissue distribution, detected in embryonic brain and orsal root ganglia.

Its subcellular location is the cell membrane. The protein resides in the endosome membrane. It localises to the cell projection. The protein localises to the axon. It is found in the dendrite. Its subcellular location is the cytoplasm. The protein resides in the perinuclear region. It localises to the postsynaptic density. The enzyme catalyses L-tyrosyl-[protein] + ATP = O-phospho-L-tyrosyl-[protein] + ADP + H(+). The neuronal activity and the influx of calcium positively regulate the kinase activity and the internalization of the receptor which are both important for active signaling. Regulated by NGFR that may control the internalization of the receptor. NGFR may also stimulate the activation by BDNF compared to NTF3 and NTF4. The formation of active receptors dimers able to fully transduce the ligand-mediated signal, may be negatively regulated by the formation of inactive heterodimers with the non-catalytic isoforms. Functionally, receptor tyrosine kinase involved in the development and the maturation of the central and the peripheral nervous systems through regulation of neuron survival, proliferation, migration, differentiation, and synapse formation and plasticity. Receptor for BDNF/brain-derived neurotrophic factor and NTF4/neurotrophin-4. Alternatively can also bind NTF3/neurotrophin-3 which is less efficient in activating the receptor but regulates neuron survival through NTRK2. Upon ligand-binding, undergoes homodimerization, autophosphorylation and activation. Recruits, phosphorylates and/or activates several downstream effectors including SHC1, FRS2, SH2B1, SH2B2 and PLCG1 that regulate distinct overlapping signaling cascades. Through SHC1, FRS2, SH2B1, SH2B2 activates the GRB2-Ras-MAPK cascade that regulates for instance neuronal differentiation including neurite outgrowth. Through the same effectors controls the Ras-PI3 kinase-AKT1 signaling cascade that mainly regulates growth and survival. Through PLCG1 and the downstream protein kinase C-regulated pathways controls synaptic plasticity. Thereby, plays a role in learning and memory by regulating both short term synaptic function and long-term potentiation. PLCG1 also leads to NF-Kappa-B activation and the transcription of genes involved in cell survival. Hence, it is able to suppress anoikis, the apoptosis resulting from loss of cell-matrix interactions. May also play a role in neutrophin-dependent calcium signaling in glial cells and mediate communication between neurons and glia. In Gallus gallus (Chicken), this protein is BDNF/NT-3 growth factors receptor (NTRK2).